We begin with the raw amino-acid sequence, 494 residues long: Argininosuccinate synthase, chloroplastic (494 aa).

The transit peptide at 1-73 (MAEISATSFP…SRSCKNQAIR (73 aa)) directs the protein to the chloroplast. Ala74 is modified (N-acetylalanine). ATP-binding positions include 102–110 (AYSGGLDTS) and Ala129. The L-citrulline site is built by Tyr181 and Ser186. Gly211 lines the ATP pocket. The L-aspartate site is built by Thr213, Asn217, and Asp218. L-citrulline is bound at residue Asn217. Residues Arg221, Ser270, Ser279, Glu355, and Tyr367 each coordinate L-citrulline.

It belongs to the argininosuccinate synthase family. Type 1 subfamily. Homotetramer.

The protein localises to the plastid. The protein resides in the chloroplast. It carries out the reaction L-citrulline + L-aspartate + ATP = 2-(N(omega)-L-arginino)succinate + AMP + diphosphate + H(+). It functions in the pathway amino-acid biosynthesis; L-arginine biosynthesis; L-arginine from L-ornithine and carbamoyl phosphate: step 2/3. This Arabidopsis thaliana (Mouse-ear cress) protein is Argininosuccinate synthase, chloroplastic.